Consider the following 958-residue polypeptide: MLGAIAKKIFGSSNDRRVKGYRPRVAAINALEPEMEALSDEALRARTDALKAEVAAGKSLDDILVPAFATVREAAKRVLGQRHFDVQLIGGMVLHEGGIAEMKTGEGKTLVATLATYLNALAGQGVHVVTVNDYLARRDAEWMGRVYGFLGLSTGIIVHGLDDAERKAAYACDITYGTNNEYGFDYLRDNMKYELGQMVQRGHAFAIVDEVDSILIDEARTPLIISGPIDDRSDLYVAIDALMPRLAREDYDLDEKQRTVSLTESGNEHIEELLREAGVLREGDLYDAHNITIVHHVNQALRAHTLFTRDKDYIVRNDEVVIIDEFTGRMMPGRRYSEGLHQALEAKERVTIQPENQTLASITFQNYFRLYKKLAGMTGTASTEADEFQEIYNLGVVEIPTNRPVERVDEDDEVYRTAEEKYAAIIAEIDKAHARHQPVLVGTGSIERSEHIAALLERHGYRPLDYSNLSAMEEVYAAAREGRVTKRFAVLNARFHEQEAYIVAQAGVPGAITIATNMAGRGTDIKLGGNVEMRVAQELAEVPEGPERQARVDAIRREIDENRAQVLASGEPADPEAGRKSALPGGLYIVGTERNESRRIDNQLRGRSGRQGDPGRSKFYLSLQDDLMRIFGSDRMDGMLQKLGLEQGEAIIHPWINKAIAKAQQKVEARNFDMRKNVLKYDNVMNDQRKVVFEQRREFMAQESVRETVDEMRHGVVDDVVAQHIPEDAYPEQWDVAGLREAIGAQLNLDVPVEDWAKEEGIADEEIRDRLRKAADEGYAARVERNGPDLMAYVEKQVLLQSLDHLWREHLVTLDHLRQVIGWRGIAQRDPLNEYKSEAFELFNGLIGSLREQVTGQLMRIEIMMQEPEAPSLPPMFAQHLDPVTGENEFALPQGSGSFGGGGGAFGYAAQDLSADAAVLERDPTDASTWGRVGRNEPCPCGSGKKYKHCHGRFSGEA.

ATP-binding positions include Q87, 105-109 (GEGKT), and D524. The tract at residues 598-617 (RRIDNQLRGRSGRQGDPGRS) is disordered. Zn(2+)-binding residues include C939, C941, C950, and H951.

This sequence belongs to the SecA family. Monomer and homodimer. Part of the essential Sec protein translocation apparatus which comprises SecA, SecYEG and auxiliary proteins SecDF-YajC and YidC. Zn(2+) is required as a cofactor.

The protein localises to the cell inner membrane. It localises to the cytoplasm. The enzyme catalyses ATP + H2O + cellular proteinSide 1 = ADP + phosphate + cellular proteinSide 2.. In terms of biological role, part of the Sec protein translocase complex. Interacts with the SecYEG preprotein conducting channel. Has a central role in coupling the hydrolysis of ATP to the transfer of proteins into and across the cell membrane, serving both as a receptor for the preprotein-SecB complex and as an ATP-driven molecular motor driving the stepwise translocation of polypeptide chains across the membrane. In Methylobacterium sp. (strain 4-46), this protein is Protein translocase subunit SecA.